The sequence spans 296 residues: MFS-type transporter pytF (296 aa).

7 consecutive transmembrane segments (helical) span residues 30–50 (WLVV…LNSF), 72–92 (WIGS…GPVF), 98–118 (KVLF…VSLC), 124–144 (FILA…YPTI), 157–177 (LAMG…PLIL), 180–200 (LFAV…SFAL), and 238–258 (VVGM…IPLF). A glycan (N-linked (GlcNAc...) asparagine) is linked at Asn265. The chain crosses the membrane as a helical span at residues 271–291 (SLISILNAGSFVGRIVSGALA).

This sequence belongs to the major facilitator superfamily. Monocarboxylate porter (TC 2.A.1.13) family.

Its subcellular location is the cell membrane. In terms of biological role, MFS-type transporter; part of the gene cluster that mediates the biosynthesis of pyranterreones, a family of antioxidative compounds. Directly involved in the secretion of pyranterreones. This Aspergillus terreus (strain NIH 2624 / FGSC A1156) protein is MFS-type transporter pytF.